We begin with the raw amino-acid sequence, 865 residues long: MGSIDTVGMGQRAIDQIISELSLNEKVALLSGVDAWHTFAIPRLGIPSIRTTDGPNGARGTRYFNGVPSACLPCGTALGATFDRDLIFSLGQLLAAECRAKGAHVLLGPTINIQRGPLGGRGFESFSEDPVLSGLAAASYCSGVQDGGVVPTLKHLVCNDQEHERVAVSALVTPRALREIYLLPFQLAIQGARPGAVMTSYNKVNGLHASENPGLIRDILRGEWGYEGAVISDWFGTYSVADAVNAGLDLEMPGPTRFRGPALMHALTSNKVSEKTLNERVRKVLELVQLASRAGVPEYAPERKLNRPEDRALLRRAAGESVVLLKNDKNDSTNSPILPLDREKTTLVIGPNADLAAYCGGGSASLLAYYTVTPRQGIADKCGAEQVVFSQGCYGHKELPLLGEHLRTIETGQPGYTFRVYTEPPPASGSFKGSDSRTPVDELHMTNSSAFLMDYSHPQISGDTYYATLEGTFEPPESGVYEFGLTVAGTGLLYIDGVLVVDNKTVQRAGTSFFGIGTVEERGERYLEAGKKHHVFVEFGTAPTSNLQHHHGVVSFGPGGLRLGGCRKLDTDTAIQQAVQSAAQADQVVVCVGLSGDWESEGFDRPHMDLPPGTDELVNAVLAVQPNAVIVVQSGTPVTMPWADKAKALLQAWYGGNEAGNGIADVLFGDVNPSAKLPLTFPRELAQNPSYLSYRSERGRVLYSEDIYVGYRYYDTTGQPPLFRFGHGLSYSTFHLRDLTVRETAPYAANIKESSLRVSVTVSNTSARPGAEVVLVYVRPPAAACSVGRPVRELKGYEKVMLQPGETREVSITIPLGLATSFWDEGCDAWLSEKGLYFVEAVGTGEGNTLVAPLTVQVSRVWNGL.

Residue Asp233 is part of the active site. 4 N-linked (GlcNAc...) asparagine glycosylation sites follow: Asn330, Asn447, Asn503, and Asn764. The PA14 domain occupies 411–579 (TGQPGYTFRV…DTDTAIQQAV (169 aa)).

The protein belongs to the glycosyl hydrolase 3 family.

Its subcellular location is the secreted. The enzyme catalyses Hydrolysis of terminal, non-reducing beta-D-glucosyl residues with release of beta-D-glucose.. It participates in glycan metabolism; cellulose degradation. In terms of biological role, beta-glucosidases are one of a number of cellulolytic enzymes involved in the degradation of cellulosic biomass. Catalyzes the last step releasing glucose from the inhibitory cellobiose. This Aspergillus fumigatus (strain ATCC MYA-4609 / CBS 101355 / FGSC A1100 / Af293) (Neosartorya fumigata) protein is Probable beta-glucosidase J (bglJ).